Consider the following 473-residue polypeptide: Photosystem II CP43 reaction center protein (473 aa).

Positions Met-1 to Glu-14 are excised as a propeptide. The residue at position 15 (Thr-15) is an N-acetylthreonine. Thr-15 bears the Phosphothreonine mark. The next 5 helical transmembrane spans lie at Leu-69–Ala-93, Leu-134–Asn-155, Lys-178–Thr-200, Lys-255–Ser-275, and Trp-291–Ala-312. Glu-367 contributes to the [CaMn4O5] cluster binding site. Residues Arg-447–Pro-471 traverse the membrane as a helical segment.

It belongs to the PsbB/PsbC family. PsbC subfamily. PSII is composed of 1 copy each of membrane proteins PsbA, PsbB, PsbC, PsbD, PsbE, PsbF, PsbH, PsbI, PsbJ, PsbK, PsbL, PsbM, PsbT, PsbX, PsbY, PsbZ, Psb30/Ycf12, at least 3 peripheral proteins of the oxygen-evolving complex and a large number of cofactors. It forms dimeric complexes. The cofactor is Binds multiple chlorophylls and provides some of the ligands for the Ca-4Mn-5O cluster of the oxygen-evolving complex. It may also provide a ligand for a Cl- that is required for oxygen evolution. PSII binds additional chlorophylls, carotenoids and specific lipids..

The protein resides in the plastid. It localises to the chloroplast thylakoid membrane. Functionally, one of the components of the core complex of photosystem II (PSII). It binds chlorophyll and helps catalyze the primary light-induced photochemical processes of PSII. PSII is a light-driven water:plastoquinone oxidoreductase, using light energy to abstract electrons from H(2)O, generating O(2) and a proton gradient subsequently used for ATP formation. The sequence is that of Photosystem II CP43 reaction center protein from Nephroselmis olivacea (Green alga).